The chain runs to 498 residues: Ribosomal RNA small subunit methyltransferase G 2 (498 aa).

Residues 1–230 (MRNGTIRYPG…FQRLGPPTRI (230 aa)) are methyltransferase G. S-adenosyl-L-methionine is bound by residues G89, M94, and R154. The interval 231–498 (RKETAMKRHG…SQTKHSPAPA (268 aa)) is methyltransferase TrmH family.

In the N-terminal section; belongs to the methyltransferase superfamily. RNA methyltransferase RsmG family. This sequence in the C-terminal section; belongs to the class IV-like SAM-binding methyltransferase superfamily. RNA methyltransferase TrmH family.

The protein resides in the cytoplasm. The enzyme catalyses guanosine(527) in 16S rRNA + S-adenosyl-L-methionine = N(7)-methylguanosine(527) in 16S rRNA + S-adenosyl-L-homocysteine. In terms of biological role, specifically methylates the N7 position of guanine in position 527 of 16S rRNA. This is Ribosomal RNA small subunit methyltransferase G 2 (rsmG2) from Syntrophobacter fumaroxidans (strain DSM 10017 / MPOB).